The sequence spans 245 residues: MYRYKITIEYLGTDLAGWQRQAGIMSVQQILEEAIYKFSGEQVVLFGSGRTDAGVHAIGQVAHFDLSKNLETHKIITAINYFARPYSVIVWNCEMAPNNFHARFSAVSRHYIYRILNRPYSSVINRDRVWWISSPLDVLAMQKAATYLLGKHDFTSFRASSCQSKSPIKTLTELNIIKEDEEIKLYLSAPSFLHHMVRNIVGSLVLVGKNVWQAEYIKELLEVKDRKAAGPTAPASGLYFVRTEY.

D52 serves as the catalytic Nucleophile. A substrate-binding site is contributed by Y111.

It belongs to the tRNA pseudouridine synthase TruA family. Homodimer.

The catalysed reaction is uridine(38/39/40) in tRNA = pseudouridine(38/39/40) in tRNA. Its function is as follows. Formation of pseudouridine at positions 38, 39 and 40 in the anticodon stem and loop of transfer RNAs. This chain is tRNA pseudouridine synthase A, found in Rickettsia canadensis (strain McKiel).